Here is a 699-residue protein sequence, read N- to C-terminus: Polyribonucleotide nucleotidyltransferase (699 aa).

Mg(2+)-binding residues include aspartate 485 and aspartate 491. Residues 552-611 (PRITTIKINPEKIRDVIGKGGAVIRALTEETGTTIELEDDGTVRIASSNGEATKEAIRRI) form the KH domain. The 69-residue stretch at 621 to 689 (GRIYNGKVIR…RQGRVRLSIK (69 aa)) folds into the S1 motif domain.

The protein belongs to the polyribonucleotide nucleotidyltransferase family. Component of the RNA degradosome, which is a multiprotein complex involved in RNA processing and mRNA degradation. The cofactor is Mg(2+).

It localises to the cytoplasm. The catalysed reaction is RNA(n+1) + phosphate = RNA(n) + a ribonucleoside 5'-diphosphate. Functionally, involved in mRNA degradation. Catalyzes the phosphorolysis of single-stranded polyribonucleotides processively in the 3'- to 5'-direction. In Shewanella sp. (strain W3-18-1), this protein is Polyribonucleotide nucleotidyltransferase.